Consider the following 624-residue polypeptide: DNA mismatch repair protein MutL (624 aa).

Belongs to the DNA mismatch repair MutL/HexB family.

This protein is involved in the repair of mismatches in DNA. It is required for dam-dependent methyl-directed DNA mismatch repair. May act as a 'molecular matchmaker', a protein that promotes the formation of a stable complex between two or more DNA-binding proteins in an ATP-dependent manner without itself being part of a final effector complex. This is DNA mismatch repair protein MutL from Chlorobium phaeobacteroides (strain DSM 266 / SMG 266 / 2430).